Reading from the N-terminus, the 345-residue chain is HTH-type transcriptional regulator reg1 (345 aa).

The HTH lacI-type domain occupies 1-58 (MTTRLADIAAQAGVSEATVSRVLNGKPGVAATTRQSVLAALDVLGYERPVRLRRRSAG). The H-T-H motif DNA-binding region spans 5–24 (LADIAAQAGVSEATVSRVLN).

Transcription repressor involved in control of expression of alpha-amylase and chitinase genes and of actinorhodin production. This is HTH-type transcriptional regulator reg1 (reg1) from Streptomyces lividans.